The sequence spans 904 residues: Patched domain-containing protein 4 (904 aa).

Residues 41-61 (HPVFFLTVPAVLTITFGLSAL) form a helical membrane-spanning segment. The N-linked (GlcNAc...) asparagine glycan is linked to N149. In terms of domain architecture, SSD spans 291–450 (TRSKVLVSLV…FSFFGSCLVF (160 aa)). 6 helical membrane-spanning segments follow: residues 295–312 (VLVS…SSSM), 323–343 (GLLG…IFFI), 351–371 (TLLG…FELL), 394–414 (VMVT…MGAS), 431–451 (VSIL…LVFA), and 523–543 (PFVV…CLQI). N-linked (GlcNAc...) asparagine glycosylation occurs at N625. Helical transmembrane passes span 718-738 (PVLI…FLVI), 744-764 (FWLI…MTLW), and 771-791 (ISIL…APLL). N820 carries an N-linked (GlcNAc...) asparagine glycan. 2 consecutive transmembrane segments (helical) span residues 823-843 (SFLI…FTLF) and 845-865 (CLLL…PVFL).

This sequence belongs to the patched family.

It localises to the membrane. Its function is as follows. Could act as a repressor of canonical hedgehog signaling by antagonizing the effects of SMO, as suggested by down-regulation of hedgehog target genes, including GLI1, PTCH1, and PTCH2 in PTCHD4-expressing cells. The sequence is that of Patched domain-containing protein 4 (Ptchd4) from Mus musculus (Mouse).